The sequence spans 489 residues: Putative BTB/POZ domain-containing protein R773 (489 aa).

In terms of domain architecture, BTB spans 3 to 73 (SNIELVITDE…GNTSYKFQDK (71 aa)).

This sequence belongs to the mimivirus BTB/WD family.

This is Putative BTB/POZ domain-containing protein R773 from Acanthamoeba polyphaga (Amoeba).